Here is a 75-residue protein sequence, read N- to C-terminus: Phytosulfokines 3 (75 aa).

Residues 1 to 22 (MSPKVIAICLVALLLPISISHG) form the signal peptide. Positions 23 to 66 (GRIGPIEPSKASSKVVERGNYDGRVEGCEEDDCLVERLLVAHLD) are excised as a propeptide. Tyr67 and Tyr69 each carry sulfotyrosine. A propeptide spanning residues 72 to 75 (GKHN) is cleaved from the precursor.

The protein belongs to the phytosulfokine family. In terms of processing, sulfation is important for activity and for the binding to a putative membrane receptor. Post-translationally, PSK-alpha is produced by endopeptidase digestion. PSK-beta is produced from PSK-alpha by exopeptidase digestion.

It localises to the secreted. Promotes plant cell differentiation, organogenesis and somatic embryogenesis as well as cell proliferation. This chain is Phytosulfokines 3 (PSK3), found in Oryza sativa subsp. japonica (Rice).